Here is a 1509-residue protein sequence, read N- to C-terminus: MSLSNRKEITGLTRMTPKGLKELCKKDKLYQTPRLNDTLYLHYQGFQCIEHLEEYTELKCLWLECNAISEIQGLEKLSKLKCLFLQNNLITKIENLEPCRELDTLNLSSNHIRKIQNIGTNILPVLNTLTIASNYLKDSESLSDLVQCKTLSVLDLSNNRIDDILIVKIFEQMLNLKVLVLQGNPVVSRLPQYRKTLILACKELTYLDSRPVFPRDRACAEAWKRDGYEGERKENNRWNRAERRKTRESINCTIRIRNSHRPPDQQDPLLRSSDSEDDTCTGTTLKKVALENGCVDDIWKEVSCEHPTSESGASTSSSVEDNDATSSQDDLIAEKLSNRGTLEGRPKVLNETEGSNLKRVNQNIKNVEPRNIQTIVFEEDVSKKSQVIIEEENVPKINLINEPCDLNDKKSIIVKCKKTGYTSIGPVHKKTVFHEDAEIKKMEDVVLCQDFIKSEEHMSSDFAVNSKLGKDIEQTCTAQRNEAQCKEFDEDQKIIEIESKLIHEMYESFEADDDDKLNETFDLNLYETTSEHHAHKVSFDENKMPMSCYQEDKESILLPKSMEETLFEEECFIANDKCAHDLEEIGRQMDEDLAELRQSTQNVVGLSKDEIAETDIETDEEDLLAQQDPYSPLLKQQFKNRRMKIMLIEESKAQGESQRDLNITVSNESGGDDKQDQLFARILDDATENIPKRIFGTGCDALSYNWPQEECLLQLTLSEVKETPAQESTFKNSITNSSSFEEANKICVHMDQKMAEEEEALGKLLHDLENEAEHVYEINTKMTYEETTSSKEVVSICTSLLDDIIVELTLNEILCHEKPKSFKFGPIESDEEFSYSLEPQLEKLVPPALEDPARGKSLRECLDTFSDFVSSMADPKLPLMLGRNPTLGVEKIRAAQELLKSKNLAEIYADSAESLNSQVAKEIEKRKRRVAATATRCFNQRDKYDDTLELVNNRLMIVKRDSGDLEELPPPPPLISDSESEDYDTADDEYTPGKGSHKLGSKPKDSKNLVTNSFLKEKQADSDVVEEVVKKNDHAEDEFYSLEAMTTFSSLDAEFFQKLDLQKVNDSEDSEPAINCMRNYNELQAYMKSGSLNHRMNTEETKTLQTSFSTVGSDEGKTKLRNPQEEKENALLKKMVLRMKEYEEREHQLQLVPHELGSVKLSLGGSKLFEQTPETVLVHTENEPTSKIKFIDNKKTNNDESTHLIKNYCEPLVRASCKTSNKSIDDDIQSDVSTDYESGEEVVVVEPPKLSEAVLKSFYSDGFEADLNMVHELEEATRRNLYCYHSNEMLNPTKNHPFSLKKTLSSKTSTNEVTVGAKAKWAKIAERLHEFLDPETISKLNKEQFGESDEFEDSQDANIFTDITFEENNSKKYENLVSEECNCTKSIYDENSCPSELNGNDQFSGLKEINKDKEMPTSNLELNSVMIQSKKKTSEILPNEIGNIIKACSSFEAPPTDPIGIEHFEDPTLTQMNPEFLKTKQIECNLQILSEDGDVVVQELSVNAQVSFE.

6 LRR repeats span residues 34–56 (RLNDTLYLHYQGFQCIEHLEEYT), 57–78 (ELKCLWLECNAISEIQGLEKLS), 79–100 (KLKCLFLQNNLITKIENLEPCR), 101–122 (ELDTLNLSSNHIRKIQNIGTNI), 125–146 (VLNTLTIASNYLKDSESLSDLV), and 150–171 (TLSVLDLSNNRIDDILIVKIFE). The LRRCT domain maps to 185-223 (PVVSRLPQYRKTLILACKELTYLDSRPVFPRDRACAEAW). Disordered regions lie at residues 252 to 280 (CTIRIRNSHRPPDQQDPLLRSSDSEDDTC), 306 to 327 (HPTSESGASTSSSVEDNDATSS), 962 to 1008 (SGDL…DSKN), and 1103 to 1122 (TLQTSFSTVGSDEGKTKLRN). A compositionally biased stretch (low complexity) spans 309 to 318 (SESGASTSSS). Residues 978–990 (SESEDYDTADDEY) are compositionally biased toward acidic residues. Residues 1103-1112 (TLQTSFSTVG) show a composition bias toward polar residues.

It belongs to the DNAAF1 family.

It localises to the cell projection. The protein resides in the cilium. Its function is as follows. Cilium-specific protein required for cilia structures. The sequence is that of Dynein axonemal assembly factor 1 homolog (dtr) from Drosophila yakuba (Fruit fly).